Here is a 530-residue protein sequence, read N- to C-terminus: Ubiquitin carboxyl-terminal hydrolase 17-like protein 1 (530 aa).

Positions 80 to 375 (AGLQNMGNTC…QAYVLFYIQK (296 aa)) constitute a USP domain. The active-site Nucleophile is the cysteine 89. Histidine 334 acts as the Proton acceptor in catalysis. 2 stretches are compositionally biased toward basic and acidic residues: residues 382-392 (SESVSRGREPR) and 398-411 (DTDR…LKRD). The tract at residues 382–411 (SESVSRGREPRALGAEDTDRRAKQGELKRD) is disordered.

Belongs to the peptidase C19 family. USP17 subfamily.

Its subcellular location is the nucleus. The protein resides in the endoplasmic reticulum. The catalysed reaction is Thiol-dependent hydrolysis of ester, thioester, amide, peptide and isopeptide bonds formed by the C-terminal Gly of ubiquitin (a 76-residue protein attached to proteins as an intracellular targeting signal).. Deubiquitinating enzyme that removes conjugated ubiquitin from specific proteins to regulate different cellular processes that may include cell proliferation, progression through the cell cycle, apoptosis, cell migration, and the cellular response to viral infection. This is Ubiquitin carboxyl-terminal hydrolase 17-like protein 1 (USP17L1) from Homo sapiens (Human).